The primary structure comprises 500 residues: Cytochrome P450 monooxygenase hepD (500 aa).

The chain crosses the membrane as a helical span at residues 15–35 (WILLSLSLAFIVVYSLFYLAV). 4 N-linked (GlcNAc...) asparagine glycosylation sites follow: Asn-99, Asn-185, Asn-373, and Asn-409. A heme-binding site is contributed by Cys-445. Residue Asn-482 is glycosylated (N-linked (GlcNAc...) asparagine).

This sequence belongs to the cytochrome P450 family. The cofactor is heme.

Its subcellular location is the membrane. Its pathway is secondary metabolite biosynthesis. In terms of biological role, cytochrome P450 monooxygenase; part of the gene cluster that mediates the biosynthesis of heptelidic acid (HA), a sesquiterpene lactone that acts as an inhibitor of glyceraldehyde-3-phosphatedehydrogenase (GAPDH) and a growth inhibitor of the salt-tolerant lactic acid bacteria in soy sauce brewing. This is Cytochrome P450 monooxygenase hepD from Aspergillus oryzae (strain ATCC 42149 / RIB 40) (Yellow koji mold).